We begin with the raw amino-acid sequence, 752 residues long: DNA ligase (752 aa).

The interval 1–25 is disordered; the sequence is MKRNGFVPSNSVGRRGIPSNSTSSA. Residues 91–95, 140–141, and glutamate 170 each bind NAD(+); these read DADFD and SL. The N6-AMP-lysine intermediate role is filled by lysine 172. NAD(+) is bound by residues arginine 193, glutamate 233, lysine 350, and lysine 374. Zn(2+) contacts are provided by cysteine 474, cysteine 477, cysteine 493, and cysteine 499. Residues 669-752 form the BRCT domain; that stretch reads STPRTLAGLT…TLLDGGPAAL (84 aa).

Belongs to the NAD-dependent DNA ligase family. LigA subfamily. Mg(2+) serves as cofactor. Requires Mn(2+) as cofactor.

The catalysed reaction is NAD(+) + (deoxyribonucleotide)n-3'-hydroxyl + 5'-phospho-(deoxyribonucleotide)m = (deoxyribonucleotide)n+m + AMP + beta-nicotinamide D-nucleotide.. Its function is as follows. DNA ligase that catalyzes the formation of phosphodiester linkages between 5'-phosphoryl and 3'-hydroxyl groups in double-stranded DNA using NAD as a coenzyme and as the energy source for the reaction. It is essential for DNA replication and repair of damaged DNA. The sequence is that of DNA ligase from Nocardioides sp. (strain ATCC BAA-499 / JS614).